The chain runs to 227 residues: 2,3-bisphosphoglycerate-dependent phosphoglycerate mutase (227 aa).

Residues 7-14, 20-21, arginine 59, 86-89, lysine 97, 113-114, and 182-183 each bind substrate; these read RHGFSEWN, TG, ERHY, RR, and GN. Histidine 8 (tele-phosphohistidine intermediate) is an active-site residue. Glutamate 86 (proton donor/acceptor) is an active-site residue.

Belongs to the phosphoglycerate mutase family. BPG-dependent PGAM subfamily. Homodimer.

The catalysed reaction is (2R)-2-phosphoglycerate = (2R)-3-phosphoglycerate. The protein operates within carbohydrate degradation; glycolysis; pyruvate from D-glyceraldehyde 3-phosphate: step 3/5. Catalyzes the interconversion of 2-phosphoglycerate and 3-phosphoglycerate. The protein is 2,3-bisphosphoglycerate-dependent phosphoglycerate mutase of Haemophilus influenzae (strain ATCC 51907 / DSM 11121 / KW20 / Rd).